Reading from the N-terminus, the 352-residue chain is Putative F-box protein At5g14160 (352 aa).

The region spanning 14–60 is the F-box domain; that stretch reads GVDWSELPEDVIRLVLRRLRLSDFHRARAVCSTWCRVWGDCVSKPNQ.

In Arabidopsis thaliana (Mouse-ear cress), this protein is Putative F-box protein At5g14160.